The primary structure comprises 104 residues: Large ribosomal subunit protein bL21 (104 aa).

Belongs to the bacterial ribosomal protein bL21 family. In terms of assembly, part of the 50S ribosomal subunit. Contacts protein L20.

Its function is as follows. This protein binds to 23S rRNA in the presence of protein L20. This Thermodesulfovibrio yellowstonii (strain ATCC 51303 / DSM 11347 / YP87) protein is Large ribosomal subunit protein bL21.